Here is a 210-residue protein sequence, read N- to C-terminus: Glutathione S-transferase P (210 aa).

One can recognise a GST N-terminal domain in the interval 2-81; the sequence is PPYTIVYFPV…HLGRSLGLYG (80 aa). Residue Tyr4 is modified to Phosphotyrosine; by EGFR. Glutathione is bound by residues Tyr8, Arg14, Trp39, Lys45, 52–53, and 65–66; these read QL and QS. In terms of domain architecture, GST C-terminal spans 83–204; the sequence is DQKEAALVDM…SSPDHVNRPI (122 aa). N6-succinyllysine is present on residues Lys103 and Lys116. Lys128 is modified (N6-acetyllysine).

The protein belongs to the GST superfamily. Pi family. As to quaternary structure, homodimer. Interacts with CDK5.

It localises to the cytoplasm. The protein resides in the mitochondrion. It is found in the nucleus. It catalyses the reaction RX + glutathione = an S-substituted glutathione + a halide anion + H(+). It carries out the reaction prostaglandin J2 + glutathione = prostaglandin J2-S-(R)-glutathione. The catalysed reaction is prostaglandin J2 + glutathione = prostaglandin J2-S-(S)-glutathione. The enzyme catalyses prostaglandin A2 + glutathione = prostaglandin A2-S-(S)-glutathione. It catalyses the reaction 11(S)-hydroxy-14(S),15(S)-epoxy-(5Z,8Z,12E)-eicosatrienoate + glutathione = (11S,15S)-dihydroxy-14(R)-S-glutathionyl-(5Z,8Z,12E)-eicosatrienoate. Conjugation of reduced glutathione to a wide number of exogenous and endogenous hydrophobic electrophiles. Involved in the formation of glutathione conjugates of both prostaglandin A2 (PGA2) and prostaglandin J2 (PGJ2). Participates in the formation of novel hepoxilin regioisomers. Negatively regulates CDK5 activity via p25/p35 translocation to prevent neurodegeneration. The chain is Glutathione S-transferase P (GSTP1) from Mesocricetus auratus (Golden hamster).